The primary structure comprises 194 residues: dITP/XTP pyrophosphatase (194 aa).

8-13 (TNNPHK) contacts substrate. D69 (proton acceptor) is an active-site residue. D69 contacts Mg(2+). Substrate is bound by residues T70, 150-153 (FGYD), K173, and 178-179 (HR).

The protein belongs to the HAM1 NTPase family. As to quaternary structure, homodimer. Requires Mg(2+) as cofactor.

The enzyme catalyses XTP + H2O = XMP + diphosphate + H(+). The catalysed reaction is dITP + H2O = dIMP + diphosphate + H(+). It catalyses the reaction ITP + H2O = IMP + diphosphate + H(+). Functionally, pyrophosphatase that catalyzes the hydrolysis of nucleoside triphosphates to their monophosphate derivatives, with a high preference for the non-canonical purine nucleotides XTP (xanthosine triphosphate), dITP (deoxyinosine triphosphate) and ITP. Seems to function as a house-cleaning enzyme that removes non-canonical purine nucleotides from the nucleotide pool, thus preventing their incorporation into DNA/RNA and avoiding chromosomal lesions. The polypeptide is dITP/XTP pyrophosphatase (Porphyromonas gingivalis (strain ATCC BAA-308 / W83)).